The sequence spans 165 residues: Xanthine-guanine phosphoribosyltransferase (165 aa).

5-phospho-alpha-D-ribose 1-diphosphate contacts are provided by residues 41–42 and 98–106; these read RG and DDLTDTGKT. Position 99 (Asp99) interacts with Mg(2+). Residues Asp102 and Ile145 each contribute to the guanine site. Asp102 and Ile145 together coordinate xanthine. Residues 102-106 and 144-145 contribute to the GMP site; these read DTGKT and WI.

Belongs to the purine/pyrimidine phosphoribosyltransferase family. XGPT subfamily. In terms of assembly, homotetramer. The cofactor is Mg(2+).

It is found in the cell inner membrane. It carries out the reaction GMP + diphosphate = guanine + 5-phospho-alpha-D-ribose 1-diphosphate. The catalysed reaction is XMP + diphosphate = xanthine + 5-phospho-alpha-D-ribose 1-diphosphate. The enzyme catalyses IMP + diphosphate = hypoxanthine + 5-phospho-alpha-D-ribose 1-diphosphate. It functions in the pathway purine metabolism; GMP biosynthesis via salvage pathway; GMP from guanine: step 1/1. The protein operates within purine metabolism; XMP biosynthesis via salvage pathway; XMP from xanthine: step 1/1. Its function is as follows. Purine salvage pathway enzyme that catalyzes the transfer of the ribosyl-5-phosphate group from 5-phospho-alpha-D-ribose 1-diphosphate (PRPP) to the N9 position of the 6-oxopurines guanine and xanthine to form the corresponding ribonucleotides GMP (guanosine 5'-monophosphate) and XMP (xanthosine 5'-monophosphate), with the release of PPi. To a lesser extent, also acts on hypoxanthine. This chain is Xanthine-guanine phosphoribosyltransferase, found in Rhizobium meliloti (strain 1021) (Ensifer meliloti).